The primary structure comprises 239 residues: MSTPLSLFVTGTDTEIGKTFVSAALLHGFARHGLRAAAMKPVAAGAYERDGVWRNEDADQLDAAASVVLPPELRTPFLLKAPAAPHIVAAHEHVTLDIDTIVACHRDALTRADIVVVEGVGGFRVPLNDTQDTADLAVALGLPVVLVVGMRLGCISHALLTADAIAARGLTLAGWVANHVDPAMTYADENVATIRDWLAREHRAPLLGRIAHMAPADPESAAATLDIAALVDTLRAAQR.

Residue 15–20 (EIGKTF) participates in ATP binding. T19 lines the Mg(2+) pocket. K40 is a catalytic residue. Residues D57, 118-121 (EGVG), and 178-179 (NH) contribute to the ATP site. Mg(2+)-binding residues include D57 and E118.

Belongs to the dethiobiotin synthetase family. Homodimer. Mg(2+) serves as cofactor.

It localises to the cytoplasm. The catalysed reaction is (7R,8S)-7,8-diammoniononanoate + CO2 + ATP = (4R,5S)-dethiobiotin + ADP + phosphate + 3 H(+). The protein operates within cofactor biosynthesis; biotin biosynthesis; biotin from 7,8-diaminononanoate: step 1/2. Catalyzes a mechanistically unusual reaction, the ATP-dependent insertion of CO2 between the N7 and N8 nitrogen atoms of 7,8-diaminopelargonic acid (DAPA, also called 7,8-diammoniononanoate) to form a ureido ring. This chain is ATP-dependent dethiobiotin synthetase BioD, found in Burkholderia multivorans (strain ATCC 17616 / 249).